The following is a 76-amino-acid chain: Sec-independent protein translocase protein TatA (76 aa).

A helical membrane pass occupies residues 1 to 21 (MGGISITQLLIIVAIVVLLFG). A disordered region spans residues 45–76 (DDNKEKDAEFKSLSDDSETTAKTEKAKDKEQA).

The protein belongs to the TatA/E family. The Tat system comprises two distinct complexes: a TatABC complex, containing multiple copies of TatA, TatB and TatC subunits, and a separate TatA complex, containing only TatA subunits. Substrates initially bind to the TatABC complex, which probably triggers association of the separate TatA complex to form the active translocon.

The protein localises to the cell inner membrane. Part of the twin-arginine translocation (Tat) system that transports large folded proteins containing a characteristic twin-arginine motif in their signal peptide across membranes. TatA could form the protein-conducting channel of the Tat system. This is Sec-independent protein translocase protein TatA from Pasteurella multocida (strain Pm70).